Here is a 439-residue protein sequence, read N- to C-terminus: sn-glycerol-3-phosphate-binding periplasmic protein UgpB (439 aa).

The first 25 residues, 1 to 25 (MFNNSIHKVSICIALTLTFSANAMA), serve as a signal peptide directing secretion. Y67, E91, S146, S272, G309, Y348, and R399 together coordinate sn-glycerol 3-phosphate.

It belongs to the bacterial solute-binding protein 1 family. As to quaternary structure, the complex is composed of two ATP-binding proteins (UgpC), two transmembrane proteins (UgpA and UgpE) and a solute-binding protein (UgpB).

It is found in the periplasm. Its function is as follows. Part of the ABC transporter complex UgpBAEC involved in sn-glycerol-3-phosphate (G3P) import. Binds G3P. The sequence is that of sn-glycerol-3-phosphate-binding periplasmic protein UgpB (ugpB) from Yersinia pseudotuberculosis serotype I (strain IP32953).